Here is a 101-residue protein sequence, read N- to C-terminus: Putative pterin-4-alpha-carbinolamine dehydratase (101 aa).

Belongs to the pterin-4-alpha-carbinolamine dehydratase family.

The catalysed reaction is (4aS,6R)-4a-hydroxy-L-erythro-5,6,7,8-tetrahydrobiopterin = (6R)-L-erythro-6,7-dihydrobiopterin + H2O. In Rhodopseudomonas palustris (strain BisB18), this protein is Putative pterin-4-alpha-carbinolamine dehydratase.